The chain runs to 707 residues: Glucose starvation modulator protein 1 (707 aa).

Positions 20 to 48 (CTFCHQKHLQCSNERPCKNCVKRNIADQC) form a DNA-binding region, zn(2)-C6 fungal-type. Disordered stretches follow at residues 63–122 (NSKA…PNDL), 154–188 (QPTHTVASETSSSYSQVQPQHHPESSVPPSAPPES), 260–283 (DQQQSSSEATGTSASKAVPMGPSH), and 385–404 (NVSSRGNNNTSNQKLQSAIA). Low complexity-rich tracts occupy residues 66–79 (AVAAATTPEATTTT) and 91–104 (SPSISFPSSSISPI). Composition is skewed to polar residues over residues 105–114 (NTSTFDTNGH) and 154–172 (QPTHTVASETSSSYSQVQP). Residues 178 to 188 (SSVPPSAPPES) are compositionally biased toward low complexity. Polar residues predominate over residues 260–274 (DQQQSSSEATGTSAS). The PAS domain maps to 522–591 (DYEKLSQLNS…FQLFKSVAVG (70 aa)). The span at 621–652 (NYNNNYNHNYSHNNNNNNNSNNSNNNGMSTGA) shows a compositional bias: low complexity. A disordered region spans residues 621–659 (NYNNNYNHNYSHNNNNNNNSNNSNNNGMSTGAGNSGDGD).

This sequence belongs to the ERT1/acuK family.

The protein resides in the nucleus. Transcription factor which regulates nonfermentable carbon utilization. The chain is Glucose starvation modulator protein 1 (GSM1) from Lodderomyces elongisporus (strain ATCC 11503 / CBS 2605 / JCM 1781 / NBRC 1676 / NRRL YB-4239) (Yeast).